We begin with the raw amino-acid sequence, 1018 residues long: Pikachurin (1018 aa).

Residues 1 to 23 form the signal peptide; sequence MDLIRGVLLRLLLLASSLGPGAA. Fibronectin type-III domains are found at residues 37 to 145 and 153 to 248; these read PPLD…TLPQ and APQQ…TARP. Asparagine 47 carries N-linked (GlcNAc...) asparagine glycosylation. Positions 228–274 are disordered; that stretch reads VNPHGSSPRSQPSSTIRTARPEESGSGRYGPHYATDTEAGEDDDTFE. Over residues 231–244 the composition is skewed to polar residues; it reads HGSSPRSQPSSTIR. A compositionally biased stretch (acidic residues) spans 265–274; the sequence is EAGEDDDTFE. The region spanning 352–390 is the EGF-like 1 domain; that stretch reads FDTSCDETVCSADSFCVSDYTWGGSRCHCNLGKGGESCS. Intrachain disulfides connect cysteine 356-cysteine 367, cysteine 361-cysteine 378, cysteine 380-cysteine 389, cysteine 543-cysteine 573, cysteine 578-cysteine 589, cysteine 583-cysteine 599, cysteine 601-cysteine 610, cysteine 797-cysteine 808, cysteine 802-cysteine 817, cysteine 819-cysteine 828, and cysteine 988-cysteine 1015. The Laminin G-like 1 domain occupies 395 to 573; the sequence is IQYPQFFGHS…ALSGADVGEC (179 aa). 2 EGF-like domains span residues 574-611 and 793-829; these read SSGI…RHCE and AAHP…LHCQ. One can recognise a Laminin G-like 2 domain in the interval 618-797; that stretch reads IPQFKESLRS…VNVENAAHPC (180 aa). One can recognise a Laminin G-like 3 domain in the interval 836 to 1015; it reads IEIPQFIGRS…AVDGKNINTC (180 aa).

Interacts with DAG1 alpha-dystroglycan. Interacts with GPR158 and GPR179; transsynaptic interaction is required for synaptic organization of photoreceptor cells. In terms of processing, O-glycosylated; contains chondroitin sulfate and heparan sulfate.

It is found in the secreted. It localises to the extracellular space. The protein localises to the extracellular matrix. Its subcellular location is the synaptic cleft. The protein resides in the presynaptic active zone. Functionally, involved in both the retinal photoreceptor ribbon synapse formation and physiological functions of visual perception. Plays a key role in the synaptic organization of photoreceptors by mediating transsynaptic interaction between alpha-dystroglycan and GPR179 on the postsynaptic membrane. Necessary for proper bipolar dendritic tip apposition to the photoreceptor ribbon synapse. Promotes matrix assembly and cell adhesiveness. The polypeptide is Pikachurin (EGFLAM) (Bos taurus (Bovine)).